The primary structure comprises 817 residues: MAKTAASSALEDLDLSGEEVQRLTSAFQDPEFRRMFSDYAAEITDPENRRRYEEEITALERERGVEVRFVHPEPGHVLRTSLDGEHRCFVNVCSNSLVGAPSSRPGPGRGGTAAGSHWSLPYSLAPGRQYAGRNGNRYTVYDVVFHPEALALARSHERFREMLDATALEAVEQQFGVRLDRRNAKTLKIKYKGTPEAAVLRTPLPEGVRAQPEGELPGLLPYPPYPYHYPAAAESTARSPASPAPKAVQRPEPTEPRCSVVQRHHVDLQDYRCSRDAAPSTVPHELVVTIELPLLRSAERAELEVKGKLLCLDSRNPDYRLRLSLPYPVDDGRGRAQYNKARRQLVVTLPVALAVARQDFSTTPEGPTAETGTDNIACTSAGDLAGAREESADSSGADHGRKSCVVAPDAGTAKAEGELVPEPEQDFGGDSVTPLGPGEGTTPENRSLLYSAFQSGDAESLAERSGVYGDLSVQTSEEQEGTCHDTSGSDMGGPGTESIKPLCPPLQCNQDEDSLTLLIQVPGIQPQSLHGDLSPFSYELCFSTQDSGYSFTLQFAPENKLSTKEPAISISLNNAVIVLAKSPESHGLWREWYWGLNKDSLEERLFIDEENVNEFLEEVVRSPLKPARSLSPPLIEVLQVTEEQIQIHAKLQECSDPDGLQGKEKGVKEECPLSEKENTEHSTTSTADSNSSVAVEGLKINTCGAVGLQQGCPDVPHVLSGKRLQSEAKMDPEFIRESSTAYSAEEKENIKEPVITKEKKIGGDHLSSLPNKTAVQNTHDFDTIKETNMQDGSVQIIKDHTTHCAFDFQNSLLYDLD.

4 disordered regions span residues 233-259 (AEST…PRCS), 385-404 (AGAR…RKSC), 410-445 (AGTA…TPEN), and 473-503 (VQTS…KPLC). Basic and acidic residues predominate over residues 386 to 401 (GAREESADSSGADHGR). Residues S622 and S631 each carry the phosphoserine modification. The disordered stretch occupies residues 653-692 (ECSDPDGLQGKEKGVKEECPLSEKENTEHSTTSTADSNSS). Positions 661–680 (QGKEKGVKEECPLSEKENTE) are enriched in basic and acidic residues. The span at 681-692 (HSTTSTADSNSS) shows a compositional bias: polar residues.

Belongs to the PIH1 family. Kintoun subfamily. Interacts with CFAP300. Interacts with DNAI2 and HSPA1A. Interacts with DNAAF4. Interacts with DNAAF6/PIH1D3.

Its subcellular location is the cytoplasm. It is found in the dynein axonemal particle. In terms of biological role, required for cytoplasmic pre-assembly of axonemal dyneins, thereby playing a central role in motility in cilia and flagella. Involved in pre-assembly of dynein arm complexes in the cytoplasm before intraflagellar transport loads them for the ciliary compartment. The polypeptide is Protein kintoun (Rattus norvegicus (Rat)).